The following is a 337-amino-acid chain: Probable dual-specificity RNA methyltransferase RlmN (337 aa).

Residue Glu-88 is the Proton acceptor of the active site. The region spanning 94–322 is the Radical SAM core domain; it reads SSDRLTVCVS…ASIRRSRGLD (229 aa). The cysteines at positions 101 and 327 are disulfide-linked. [4Fe-4S] cluster-binding residues include Cys-108, Cys-112, and Cys-115. Residues 155 to 156, Ser-185, 208 to 210, and Asn-284 contribute to the S-adenosyl-L-methionine site; these read GE and SLH. Cys-327 functions as the S-methylcysteine intermediate in the catalytic mechanism.

Belongs to the radical SAM superfamily. RlmN family. It depends on [4Fe-4S] cluster as a cofactor.

It is found in the cytoplasm. It carries out the reaction adenosine(2503) in 23S rRNA + 2 reduced [2Fe-2S]-[ferredoxin] + 2 S-adenosyl-L-methionine = 2-methyladenosine(2503) in 23S rRNA + 5'-deoxyadenosine + L-methionine + 2 oxidized [2Fe-2S]-[ferredoxin] + S-adenosyl-L-homocysteine. The enzyme catalyses adenosine(37) in tRNA + 2 reduced [2Fe-2S]-[ferredoxin] + 2 S-adenosyl-L-methionine = 2-methyladenosine(37) in tRNA + 5'-deoxyadenosine + L-methionine + 2 oxidized [2Fe-2S]-[ferredoxin] + S-adenosyl-L-homocysteine. Its function is as follows. Specifically methylates position 2 of adenine 2503 in 23S rRNA and position 2 of adenine 37 in tRNAs. In Thermosynechococcus vestitus (strain NIES-2133 / IAM M-273 / BP-1), this protein is Probable dual-specificity RNA methyltransferase RlmN.